The primary structure comprises 114 residues: Iron-sulfur cluster insertion protein ErpA (114 aa).

3 residues coordinate iron-sulfur cluster: C42, C106, and C108.

Belongs to the HesB/IscA family. As to quaternary structure, homodimer. Iron-sulfur cluster serves as cofactor.

Its function is as follows. Required for insertion of 4Fe-4S clusters for at least IspG. The sequence is that of Iron-sulfur cluster insertion protein ErpA from Erwinia tasmaniensis (strain DSM 17950 / CFBP 7177 / CIP 109463 / NCPPB 4357 / Et1/99).